Consider the following 501-residue polypeptide: Glycerol kinase (501 aa).

Residue threonine 12 participates in ADP binding. ATP is bound by residues threonine 12, threonine 13, and serine 14. Threonine 12 provides a ligand contact to sn-glycerol 3-phosphate. Residue arginine 16 coordinates ADP. 4 residues coordinate sn-glycerol 3-phosphate: arginine 82, glutamate 83, tyrosine 134, and aspartate 244. Residues arginine 82, glutamate 83, tyrosine 134, aspartate 244, and glutamine 245 each coordinate glycerol. ADP-binding residues include threonine 266 and glycine 310. The ATP site is built by threonine 266, glycine 310, glutamine 314, and glycine 411. ADP is bound by residues glycine 411 and asparagine 415.

It belongs to the FGGY kinase family.

The enzyme catalyses glycerol + ATP = sn-glycerol 3-phosphate + ADP + H(+). The protein operates within polyol metabolism; glycerol degradation via glycerol kinase pathway; sn-glycerol 3-phosphate from glycerol: step 1/1. Inhibited by fructose 1,6-bisphosphate (FBP). In terms of biological role, key enzyme in the regulation of glycerol uptake and metabolism. Catalyzes the phosphorylation of glycerol to yield sn-glycerol 3-phosphate. This is Glycerol kinase from Methylorubrum extorquens (strain PA1) (Methylobacterium extorquens).